A 162-amino-acid chain; its full sequence is RxLR effector protein PITG_06094 (162 aa).

Residues 1–20 form the signal peptide; that stretch reads MRLSFILAATLTGLLACATA. The RxLR-dEER signature appears at 51–91; sequence RFLRAYNDAEDDSEDPKNVKNTVDAKPADESEDSELSEEER. A disordered region spans residues 56 to 88; that stretch reads YNDAEDDSEDPKNVKNTVDAKPADESEDSELSE.

Belongs to the RxLR effector family.

It localises to the secreted. The protein localises to the host cytoplasm. Its subcellular location is the host nucleus. The protein resides in the host nucleolus. Functionally, effector that enhances P.infestans colonization of Nicotiana benthamiana leaves. The chain is RxLR effector protein PITG_06094 from Phytophthora infestans (strain T30-4) (Potato late blight agent).